Consider the following 259-residue polypeptide: Sphinganine C4-monooxygenase 2 (259 aa).

3 helical membrane passes run 10–30 (FLGT…YICL), 54–74 (AVVK…VILF), and 91–111 (ILLL…WQYF). The 137-residue stretch at 98 to 234 (FIIAMLVIDT…FVMWDRILGT (137 aa)) folds into the Fatty acid hydroxylase domain. The short motif at 113-117 (HRYMH) is the Histidine box-1 element. Positions 127-131 (HSQHH) match the Histidine box-2 motif. The Histidine box-3 motif lies at 206–212 (YHDVHHQ).

It belongs to the sterol desaturase family. Fe cation serves as cofactor. In terms of tissue distribution, ubiquitous, with higher levels in flowers and roots.

It is found in the endoplasmic reticulum membrane. It catalyses the reaction a dihydroceramide + 2 Fe(II)-[cytochrome b5] + O2 + 2 H(+) = a phytoceramide + 2 Fe(III)-[cytochrome b5] + H2O. It participates in membrane lipid metabolism; sphingolipid biosynthesis. Its function is as follows. Involved in sphingolipid trihydroxy long-chain base (4-hydroxysphinganine) biosynthesis. Can use C18- and C20-sphinganine as substrates to produce C18- and C20-phytosphinganines (D-ribo-2-amino-1,3,4-trihydroxyoctadecane and -eicosane). The protein is Sphinganine C4-monooxygenase 2 (SBH2) of Arabidopsis thaliana (Mouse-ear cress).